A 369-amino-acid chain; its full sequence is Type 2 DNA topoisomerase 6 subunit A (369 aa).

The Topo IIA-type catalytic domain occupies 10 to 146 (KPREIAKQKI…LGFIPEEDGS (137 aa)). The O-(5'-phospho-DNA)-tyrosine intermediate role is filled by tyrosine 103. Residues glutamate 197 and aspartate 249 each coordinate Mg(2+).

The protein belongs to the TOP6A family. As to quaternary structure, homodimer. Heterotetramer of two Top6A and two Top6B chains. Requires Mg(2+) as cofactor.

It catalyses the reaction ATP-dependent breakage, passage and rejoining of double-stranded DNA.. In terms of biological role, relaxes both positive and negative superturns and exhibits a strong decatenase activity. The sequence is that of Type 2 DNA topoisomerase 6 subunit A from Methanocaldococcus jannaschii (strain ATCC 43067 / DSM 2661 / JAL-1 / JCM 10045 / NBRC 100440) (Methanococcus jannaschii).